Reading from the N-terminus, the 148-residue chain is Small ribosomal subunit protein eS12B (148 aa).

The protein belongs to the eukaryotic ribosomal protein eS12 family. Component of the small ribosomal subunit (SSU). Mature yeast ribosomes consist of a small (40S) and a large (60S) subunit. The 40S small subunit contains 1 molecule of ribosomal RNA (18S rRNA) and at least 33 different proteins. The large 60S subunit contains 3 rRNA molecules (25S, 5.8S and 5S rRNA) and at least 46 different proteins.

It localises to the cytoplasm. Functionally, component of the ribosome, a large ribonucleoprotein complex responsible for the synthesis of proteins in the cell. The small ribosomal subunit (SSU) binds messenger RNAs (mRNAs) and translates the encoded message by selecting cognate aminoacyl-transfer RNA (tRNA) molecules. The large subunit (LSU) contains the ribosomal catalytic site termed the peptidyl transferase center (PTC), which catalyzes the formation of peptide bonds, thereby polymerizing the amino acids delivered by tRNAs into a polypeptide chain. The nascent polypeptides leave the ribosome through a tunnel in the LSU and interact with protein factors that function in enzymatic processing, targeting, and the membrane insertion of nascent chains at the exit of the ribosomal tunnel. This chain is Small ribosomal subunit protein eS12B (rps1202), found in Schizosaccharomyces pombe (strain 972 / ATCC 24843) (Fission yeast).